Reading from the N-terminus, the 126-residue chain is NADH-quinone oxidoreductase subunit A (126 aa).

The next 3 membrane-spanning stretches (helical) occupy residues 11–31 (IAIQ…SSWL), 64–84 (FLVA…YPWA), and 98–118 (EGFV…IYVI).

Belongs to the complex I subunit 3 family. As to quaternary structure, NDH-1 is composed of 14 different subunits. Subunits NuoA, H, J, K, L, M, N constitute the membrane sector of the complex.

It is found in the cell inner membrane. It carries out the reaction a quinone + NADH + 5 H(+)(in) = a quinol + NAD(+) + 4 H(+)(out). NDH-1 shuttles electrons from NADH, via FMN and iron-sulfur (Fe-S) centers, to quinones in the respiratory chain. The immediate electron acceptor for the enzyme in this species is believed to be a menaquinone. Couples the redox reaction to proton translocation (for every two electrons transferred, four hydrogen ions are translocated across the cytoplasmic membrane), and thus conserves the redox energy in a proton gradient. The chain is NADH-quinone oxidoreductase subunit A from Cytophaga hutchinsonii (strain ATCC 33406 / DSM 1761 / CIP 103989 / NBRC 15051 / NCIMB 9469 / D465).